A 144-amino-acid polypeptide reads, in one-letter code: uncharacterized protein (144 aa).

The region spanning 1–58 (MDLASLNAFIAVAETGSFSEAGERLHLTQPAVSKRIAALEQQLQVRLFDRLGREVRLT) is the HTH lysR-type domain. A DNA-binding region (H-T-H motif) is located at residues 18–38 (FSEAGERLHLTQPAVSKRIAA).

It belongs to the LysR transcriptional regulatory family.

This is an uncharacterized protein from Azotobacter vinelandii.